Consider the following 1029-residue polypeptide: DNA repair protein RAD5A (1029 aa).

A disordered region spans residues 83 to 104 (SVGANHRVEEENESVNGGGEES). The 217-residue stretch at 406 to 622 (PSTLQMARGG…YSLLRFLRIE (217 aa)) folds into the Helicase ATP-binding domain. 419-426 (DAMGLGKT) is a binding site for ATP. The DEAH box signature appears at 573 to 576 (DEAH). The RING-type zinc-finger motif lies at 794 to 834 (CPICLEALEDAVLTPCAHRLCRECLLASWRNSTSGLCPVCR). Residues 864 to 1029 (KITALLEELE…RIEELKMLFT (166 aa)) form the Helicase C-terminal domain.

It belongs to the SNF2/RAD54 helicase family. RAD16 subfamily.

The protein resides in the nucleus. Its function is as follows. Functions in error-free postreplication DNA repair or DNA-damage tolerance (DTT) pathway. Required for homologous recombination (HR) induced by DNA double-strand break (DSB) in somatic cells. Required for damage-induced DNA repair, independently of MUS81 and RECQL4A. Plays a role in synthesis-dependent strand annealing (SDSA) but not in single-strand annealing (SSA). Possesses double-stranded DNA-dependent ATPase activity. Is able to regress replication forks with preference for forks with a leading strand gap. Is able to catalyze branch migration of Holliday junctions and is unaffected by protein blockades. The chain is DNA repair protein RAD5A from Arabidopsis thaliana (Mouse-ear cress).